An 886-amino-acid chain; its full sequence is DNA mismatch repair protein MutS (886 aa).

ATP is bound at residue 627–634; that stretch reads GPNMGGKS. Residues 834–857 form a disordered region; that stretch reads VECADAPAPSDATHPALDRLRDID.

The protein belongs to the DNA mismatch repair MutS family.

Functionally, this protein is involved in the repair of mismatches in DNA. It is possible that it carries out the mismatch recognition step. This protein has a weak ATPase activity. The protein is DNA mismatch repair protein MutS of Burkholderia vietnamiensis (strain G4 / LMG 22486) (Burkholderia cepacia (strain R1808)).